The primary structure comprises 69 residues: Cold shock-like protein CspE (69 aa).

One can recognise a CSD domain in the interval 6–66; it reads GNVKWFNESK…GAKGPSAANV (61 aa).

The protein resides in the cytoplasm. This is Cold shock-like protein CspE (cspE) from Escherichia coli O6:H1 (strain CFT073 / ATCC 700928 / UPEC).